A 287-amino-acid polypeptide reads, in one-letter code: Inorganic pyrophosphatase (287 aa).

R80 serves as a coordination point for diphosphate. 3 residues coordinate Mg(2+): D117, D122, and D154.

It belongs to the PPase family. Mg(2+) is required as a cofactor.

The protein localises to the cytoplasm. The enzyme catalyses diphosphate + H2O = 2 phosphate + H(+). In Yarrowia lipolytica (strain CLIB 122 / E 150) (Yeast), this protein is Inorganic pyrophosphatase (IPP1).